A 305-amino-acid chain; its full sequence is tRNA-cytidine(32) 2-sulfurtransferase (305 aa).

The disordered stretch occupies residues 1–20; the sequence is MTAVLPLPQPLADPAPRDPR. The PP-loop motif motif lies at 59–64; it reads SGGKDS. [4Fe-4S] cluster contacts are provided by C134, C137, and C225. The disordered stretch occupies residues 282–305; sequence DAPSGLDPDPRAWLSAGHATHDSD.

The protein belongs to the TtcA family. In terms of assembly, homodimer. The cofactor is Mg(2+). It depends on [4Fe-4S] cluster as a cofactor.

The protein resides in the cytoplasm. The catalysed reaction is cytidine(32) in tRNA + S-sulfanyl-L-cysteinyl-[cysteine desulfurase] + AH2 + ATP = 2-thiocytidine(32) in tRNA + L-cysteinyl-[cysteine desulfurase] + A + AMP + diphosphate + H(+). Its pathway is tRNA modification. Catalyzes the ATP-dependent 2-thiolation of cytidine in position 32 of tRNA, to form 2-thiocytidine (s(2)C32). The sulfur atoms are provided by the cysteine/cysteine desulfurase (IscS) system. The sequence is that of tRNA-cytidine(32) 2-sulfurtransferase from Xanthomonas axonopodis pv. citri (strain 306).